The primary structure comprises 359 residues: Outer membrane protein P5 (359 aa).

The first 21 residues, 1 to 21 (MKKTAIALVVAGLAAASVAQA), serve as a signal peptide directing secretion. 8 beta stranded membrane-spanning segments follow: residues 27–37 (TFYAGVKAGQG), 64–75 (TFTYGVFGGYQI), 83–91 (LAAELGYDD), 110–121 (HGAYLSLKGSYE), 126–134 (LDVYGKAGV), 164–173 (GLFAVGAEYA), 178–185 (LAVRLEYQ), and 211–219 (CINAGISYR). Residues 233–359 (MVSKTFSLNS…RVEIAVNGTK (127 aa)) enclose the OmpA-like domain. Cys332 and Cys344 are joined by a disulfide.

This sequence belongs to the outer membrane OOP (TC 1.B.6) superfamily. OmpA family. In terms of assembly, monomer and homodimer.

It localises to the cell outer membrane. Its subcellular location is the fimbrium. Its function is as follows. Acts as a fimbriae subunit, allowing adhesion to host cells. With TolR probably plays a role in maintaining the position of the peptidoglycan cell wall in the periplasm. Acts as a porin with low permeability that allows slow penetration of small solutes; an internal gate slows down solute passage. The polypeptide is Outer membrane protein P5 (Haemophilus influenzae).